The primary structure comprises 568 residues: Urease subunit alpha (568 aa).

The 439-residue stretch at 130–568 (GGIDTHIHFI…LPMAQRYFLF (439 aa)) folds into the Urease domain. H135, H137, and K218 together coordinate Ni(2+). K218 carries the N6-carboxylysine modification. Position 220 (H220) interacts with substrate. Ni(2+) is bound by residues H247 and H273. H321 functions as the Proton donor in the catalytic mechanism. D361 provides a ligand contact to Ni(2+).

The protein belongs to the metallo-dependent hydrolases superfamily. Urease alpha subunit family. Heterotrimer of UreA (gamma), UreB (beta) and UreC (alpha) subunits. Three heterotrimers associate to form the active enzyme. It depends on Ni cation as a cofactor. Carboxylation allows a single lysine to coordinate two nickel ions.

The protein localises to the cytoplasm. The catalysed reaction is urea + 2 H2O + H(+) = hydrogencarbonate + 2 NH4(+). Its pathway is nitrogen metabolism; urea degradation; CO(2) and NH(3) from urea (urease route): step 1/1. In Burkholderia vietnamiensis (strain G4 / LMG 22486) (Burkholderia cepacia (strain R1808)), this protein is Urease subunit alpha.